The primary structure comprises 293 residues: Small ribosomal subunit biogenesis GTPase RsgA 2 (293 aa).

The 161-residue stretch at Ser-63–Leu-223 folds into the CP-type G domain. Residues Thr-112–Asp-115 and Gly-166–Ser-174 contribute to the GTP site. The Zn(2+) site is built by Cys-247, Cys-252, His-254, and Cys-260.

Belongs to the TRAFAC class YlqF/YawG GTPase family. RsgA subfamily. As to quaternary structure, monomer. Associates with 30S ribosomal subunit, binds 16S rRNA. It depends on Zn(2+) as a cofactor.

Its subcellular location is the cytoplasm. Its function is as follows. One of several proteins that assist in the late maturation steps of the functional core of the 30S ribosomal subunit. Helps release RbfA from mature subunits. May play a role in the assembly of ribosomal proteins into the subunit. Circularly permuted GTPase that catalyzes slow GTP hydrolysis, GTPase activity is stimulated by the 30S ribosomal subunit. The polypeptide is Small ribosomal subunit biogenesis GTPase RsgA 2 (Oceanobacillus iheyensis (strain DSM 14371 / CIP 107618 / JCM 11309 / KCTC 3954 / HTE831)).